Reading from the N-terminus, the 282-residue chain is DNA-3-methyladenine glycosylase 2 (282 aa).

The Proton acceptor role is filled by aspartate 238.

The protein belongs to the alkylbase DNA glycosidase AlkA family. As to quaternary structure, monomer.

It carries out the reaction Hydrolysis of alkylated DNA, releasing 3-methyladenine, 3-methylguanine, 7-methylguanine and 7-methyladenine.. Functionally, hydrolysis of the deoxyribose N-glycosidic bond to excise 3-methyladenine, 3-methylguanine, 7-methylguanine, O2-methylthymine, and O2-methylcytosine from the damaged DNA polymer formed by alkylation lesions. The chain is DNA-3-methyladenine glycosylase 2 (alkA) from Escherichia coli (strain K12).